The chain runs to 231 residues: Ribosomal RNA large subunit methyltransferase E (231 aa).

S-adenosyl-L-methionine contacts are provided by Gly76, Trp78, Asp99, Asp115, and Asp139. Lys179 functions as the Proton acceptor in the catalytic mechanism.

This sequence belongs to the class I-like SAM-binding methyltransferase superfamily. RNA methyltransferase RlmE family.

The protein localises to the cytoplasm. The catalysed reaction is uridine(2552) in 23S rRNA + S-adenosyl-L-methionine = 2'-O-methyluridine(2552) in 23S rRNA + S-adenosyl-L-homocysteine + H(+). Its function is as follows. Specifically methylates the uridine in position 2552 of 23S rRNA at the 2'-O position of the ribose in the fully assembled 50S ribosomal subunit. This is Ribosomal RNA large subunit methyltransferase E from Bradyrhizobium sp. (strain ORS 278).